Consider the following 991-residue polypeptide: Pro-apoptotic serine protease NMA111 (991 aa).

Positions methionine 1–glutamine 57 are disordered. Positions asparagine 38 to serine 50 are enriched in acidic residues. The tract at residues histidine 86–leucine 269 is serine protease. Residues histidine 117, aspartate 148, and serine 231 each act as charge relay system in the active site. PDZ domains are found at residues arginine 296–glycine 374 and proline 885–aspartate 957.

This sequence belongs to the peptidase S1C family.

The protein localises to the nucleus. Nuclear serine protease which mediates apoptosis. This Meyerozyma guilliermondii (strain ATCC 6260 / CBS 566 / DSM 6381 / JCM 1539 / NBRC 10279 / NRRL Y-324) (Yeast) protein is Pro-apoptotic serine protease NMA111 (NMA111).